The chain runs to 146 residues: Globin-2B (146 aa).

A Globin domain is found at 9-146; that stretch reads QLTADVKKDL…KLVGVVQAAL (138 aa). Histidine 101 provides a ligand contact to heme b.

Belongs to the globin family. Homodimer.

This chain is Globin-2B, found in Anadara trapezia (Sydney cockle).